Here is a 305-residue protein sequence, read N- to C-terminus: Acetylglutamate kinase (305 aa).

Substrate-binding positions include 67-68 (GG), arginine 89, and asparagine 190.

Belongs to the acetylglutamate kinase family. ArgB subfamily.

It is found in the cytoplasm. The catalysed reaction is N-acetyl-L-glutamate + ATP = N-acetyl-L-glutamyl 5-phosphate + ADP. It participates in amino-acid biosynthesis; L-arginine biosynthesis; N(2)-acetyl-L-ornithine from L-glutamate: step 2/4. Its function is as follows. Catalyzes the ATP-dependent phosphorylation of N-acetyl-L-glutamate. The polypeptide is Acetylglutamate kinase (Bifidobacterium longum (strain NCC 2705)).